The primary structure comprises 272 residues: MNISKLPPLSPSVIRRILFYLLMLLFCQQLAMIFWRIGLPDNAPVSSVQITPAQARQQPVTLNDFTLFGVSPEKNKAGALDASQMSNLPPSTLNLSLTGVMAGDDDSRSIAIISKDNEQFSRGVNEEVPGYNAKIVSIRPDRVVLQYQGRYEVLGLYSQEDSGSDGVPGAQVNEQLQQRASTTMSDYVSFSPIMNDNKLQGYRLNPGPKSDSFYRVGLQDNDMAVALNGLDLRDAEQAKKAMERMADVHNFTLTVERDGQRQDIYMEFGGDE.

Residues 1–16 (MNISKLPPLSPSVIRR) are Cytoplasmic-facing. A helical membrane pass occupies residues 17 to 35 (ILFYLLMLLFCQQLAMIFW). The Periplasmic portion of the chain corresponds to 36-272 (RIGLPDNAPV…DIYMEFGGDE (237 aa)).

This sequence belongs to the GSP C family.

It localises to the cell inner membrane. Its function is as follows. Involved in a type II secretion system (T2SS, formerly general secretion pathway, GSP) for the export of proteins. Required for the translocation of the multiple pectic enzymes. This Dickeya dadantii (strain 3937) (Erwinia chrysanthemi (strain 3937)) protein is Type II secretion system protein C (outC).